The sequence spans 288 residues: Beta-lactamase CARB-3 (288 aa).

The signal sequence occupies residues 1–17; it reads MKFLLAFSLLIPSVVFA. The active-site Acyl-ester intermediate is S65. An intrachain disulfide couples C72 to C118. Position 229–231 (229–231) interacts with substrate; it reads RSG.

It belongs to the class-A beta-lactamase family.

It carries out the reaction a beta-lactam + H2O = a substituted beta-amino acid. In terms of biological role, hydrolyzes both carbenicillin and oxacillin. The chain is Beta-lactamase CARB-3 (carB3) from Pseudomonas aeruginosa.